The following is a 475-amino-acid chain: Equilibrative nucleoside transporter 3 (475 aa).

At 1 to 51 the chain is on the cytoplasmic side; the sequence is MAFASEDNVYHSSNAVYRAPSNHQEADQEALLGKLLDYPAPGLQRPEDRFN. Position 21 is a phosphoserine (S21). Positions 31 to 32 match the Dileucine internalization motif motif; it reads LL. A helical transmembrane segment spans residues 52–72; the sequence is GAYIIFFCLGIGGLLPWNFFV. Over 73–105 the chain is Extracellular; that stretch reads TAKEYWAYKLRNCSSPASGEDPEDMDILNYFES. The N-linked (GlcNAc...) asparagine glycan is linked to N84. A helical membrane pass occupies residues 106–126; sequence YLAVASTVPSLLFLVANFLLV. Residues 127 to 134 are Cytoplasmic-facing; it reads NRVQVHVR. The helical transmembrane segment at 135 to 155 threads the bilayer; sequence VLASLSVSLAIFVVMIVLVKV. The Extracellular portion of the chain corresponds to 156-162; the sequence is DTSSWTR. The chain crosses the membrane as a helical span at residues 163–183; it reads GFFSLTIACMAIISSSSTIFN. Residues 184–199 lie on the Cytoplasmic side of the membrane; that stretch reads SSVYGLTGSFPMRNAQ. The helical transmembrane segment at 200-220 threads the bilayer; the sequence is ALISGGAMGGTVSAVALLVDL. The Extracellular portion of the chain corresponds to 221–230; the sequence is AASSDVRDST. The chain crosses the membrane as a helical span at residues 231–251; it reads LAFFLMAAVFLGLCMGLYLLL. Topologically, residues 252 to 305 are cytoplasmic; sequence SQLEYARYYMRPVAPVRVFSGEDNPSQDAPSASSVAPASRVMHTPPLGPILKKT. A helical transmembrane segment spans residues 306–326; it reads ASLGFCAVSLYFVTAFIIPAI. The Extracellular segment spans residues 327 to 340; sequence STNIQSMHKGTGSP. A helical membrane pass occupies residues 341 to 361; sequence WTSKFFVPLTVFLLFNFADLC. The Cytoplasmic portion of the chain corresponds to 362-377; sequence GRQVTAWIQVPGPRSK. A helical membrane pass occupies residues 378 to 398; it reads LLPGLVVSRFCLVPLFLLCNY. The Extracellular portion of the chain corresponds to 399-415; the sequence is QPRSHLTKVLFQSDIYP. Residues 416 to 436 traverse the membrane as a helical segment; the sequence is VLFTCLLGLSNGYLSTLVLIY. The Cytoplasmic portion of the chain corresponds to 437-450; sequence GPKIVPRELAEATS. The chain crosses the membrane as a helical span at residues 451 to 471; the sequence is VVMLFYMSVGLMLGSACAALL. Residues 472 to 475 are Extracellular-facing; that stretch reads EHFI.

This sequence belongs to the SLC29A/ENT transporter (TC 2.A.57) family. Expressed in macrophages.

The protein localises to the lysosome membrane. It localises to the late endosome membrane. The protein resides in the mitochondrion membrane. It is found in the cell membrane. It carries out the reaction adenosine(in) = adenosine(out). It catalyses the reaction guanosine(in) = guanosine(out). The enzyme catalyses inosine(in) = inosine(out). The catalysed reaction is uridine(out) = uridine(in). It carries out the reaction cytidine(in) = cytidine(out). It catalyses the reaction thymidine(in) = thymidine(out). The enzyme catalyses 2'-deoxyadenosine(in) = 2'-deoxyadenosine(out). The catalysed reaction is 2'-deoxycytidine(in) = 2'-deoxycytidine(out). It carries out the reaction guanine(out) = guanine(in). It catalyses the reaction uracil(in) = uracil(out). The enzyme catalyses (R)-noradrenaline(out) = (R)-noradrenaline(in). The catalysed reaction is dopamine(out) = dopamine(in). It carries out the reaction serotonin(out) = serotonin(in). It catalyses the reaction tyramine(in) = tyramine(out). The enzyme catalyses ATP(in) = ATP(out). In terms of biological role, uniporter that mediates the facilitative transport of nucleoside across lysosomal and mitochondrial membranes. Functions as a non-electrogenic Na(+)-independent transporter. Substrate transport is pH-dependent and enhanced under acidic condition, probably reflecting the location of the transporter in acidic intracellular compartments. Proton is not a cotransporting ion but most likely change the ionization state of the transporter which dictates transport-permissible/impermissible conformation for nucleoside translocation. May direct the nucleoside transport from lysosomes to cytosol or cytosol to mitochondria to facilitate the fundamental function of salvage synthesis of nucleic acids. Involved in the transport of nucleosides (adenosine, guanosine, uridine, thymidine, cytidine and inosine) and deoxynucleosides (deoxyadenosine, deoxycytidine). Also mediates transport of purine nucleobases (adenine, guanine), and pyrimidine nucleobases (uracil). Also able to transport monoamine neurotransmitters dopamine, serotonin, noradrenaline and tyramine. Capable of transporting ATP. Mediates nucleoside export from lysosomes in macrophages, which regulates macrophage functions and numbers. This is Equilibrative nucleoside transporter 3 from Mus musculus (Mouse).